We begin with the raw amino-acid sequence, 286 residues long: MHTRKAITEAIRKLGVQTGDLLMVHASLKAIGPVEGGAETVVAALRSAVGPTGTVMGYASWDRSPYEETLNGARLDDKARRTWPPFDPATAGTYRGFGLLNQFLVQAPGARRSAHPDASMVAVGPLAETLTEPHELGHALGKGSPVERFVRLGGKALLLGAPLNSVTALHYAEAVADIPNKRWVTYEMPMLGRNGEVAWKTASEYDSNGILDCFAIEGKPDAVETIANAYVKLGRHREGVVGFAQCYLFDAQDIVTFGVTYLEKHFGATPIVPAHEAAQRSCEPSG.

Belongs to the antibiotic N-acetyltransferase family.

It carries out the reaction a 2-deoxystreptamine antibiotic + acetyl-CoA = an N(3)-acetyl-2-deoxystreptamine antibiotic + CoA + H(+). In terms of biological role, resistance to antibiotics containing the 2-deoxy-streptamine ring including gentamicin, kanamycin, tobramycin, neomycin and apramycin. The protein is Aminoglycoside N(3)-acetyltransferase III (aacC2) of Acinetobacter baumannii.